Consider the following 386-residue polypeptide: Chorismate synthase (386 aa).

2 residues coordinate NADP(+): arginine 45 and arginine 51. FMN contacts are provided by residues 131-133, 251-252, serine 294, 309-313, and arginine 335; these read RTS, QG, and KPIPS.

The protein belongs to the chorismate synthase family. As to quaternary structure, homotetramer. It depends on FMNH2 as a cofactor.

The enzyme catalyses 5-O-(1-carboxyvinyl)-3-phosphoshikimate = chorismate + phosphate. It functions in the pathway metabolic intermediate biosynthesis; chorismate biosynthesis; chorismate from D-erythrose 4-phosphate and phosphoenolpyruvate: step 7/7. Functionally, catalyzes the anti-1,4-elimination of the C-3 phosphate and the C-6 proR hydrogen from 5-enolpyruvylshikimate-3-phosphate (EPSP) to yield chorismate, which is the branch point compound that serves as the starting substrate for the three terminal pathways of aromatic amino acid biosynthesis. This reaction introduces a second double bond into the aromatic ring system. The sequence is that of Chorismate synthase from Clostridium tetani (strain Massachusetts / E88).